The chain runs to 153 residues: MRCPYCGYEDSKVIDTRPADEGRTIKRRRECLKCQKRFTTFEKVERQPILVIKKDNRREEFDRSKILNGIIKACQKRPVSIEQMNKIVDEIENEIYNSMRDEISSREIGEMVMEKLKKLDEISYVRFASVYRQFKDINTFIEELQKLLTEKIE.

The segment at Cys3–Cys34 is a zinc-finger region. Residues Ile49 to Thr139 enclose the ATP-cone domain.

It belongs to the NrdR family. The cofactor is Zn(2+).

Negatively regulates transcription of bacterial ribonucleotide reductase nrd genes and operons by binding to NrdR-boxes. The polypeptide is Transcriptional repressor NrdR (Caldicellulosiruptor saccharolyticus (strain ATCC 43494 / DSM 8903 / Tp8T 6331)).